The chain runs to 349 residues: Thioredoxin reductase, mitochondrial (349 aa).

Residues 1 to 30 (MLLVRNSTLGRLSSLRGFFRNINESNIFYR) constitute a mitochondrion transit peptide. Residues 41-44 (SGPA), 70-71 (IA), Q75, N84, V117, C175, D318, and 325-327 (RQA) contribute to the FAD site. C172 and C175 are oxidised to a cystine.

This sequence belongs to the class-II pyridine nucleotide-disulfide oxidoreductase family. In terms of assembly, homodimer. The cofactor is FAD.

The protein resides in the mitochondrion. The catalysed reaction is [thioredoxin]-dithiol + NADP(+) = [thioredoxin]-disulfide + NADPH + H(+). In Kluyveromyces lactis (strain ATCC 8585 / CBS 2359 / DSM 70799 / NBRC 1267 / NRRL Y-1140 / WM37) (Yeast), this protein is Thioredoxin reductase, mitochondrial (TRR1).